Consider the following 631-residue polypeptide: Glutamyl-tRNA(Gln) amidotransferase subunit E (631 aa).

This sequence belongs to the GatB/GatE family. GatE subfamily. In terms of assembly, heterodimer of GatD and GatE.

It carries out the reaction L-glutamyl-tRNA(Gln) + L-glutamine + ATP + H2O = L-glutaminyl-tRNA(Gln) + L-glutamate + ADP + phosphate + H(+). Functionally, allows the formation of correctly charged Gln-tRNA(Gln) through the transamidation of misacylated Glu-tRNA(Gln) in organisms which lack glutaminyl-tRNA synthetase. The reaction takes place in the presence of glutamine and ATP through an activated gamma-phospho-Glu-tRNA(Gln). The GatDE system is specific for glutamate and does not act on aspartate. The protein is Glutamyl-tRNA(Gln) amidotransferase subunit E of Methanococcus maripaludis (strain C7 / ATCC BAA-1331).